The sequence spans 464 residues: Chromosomal replication initiator protein DnaA (464 aa).

A domain I, interacts with DnaA modulators region spans residues 1–82; sequence MSLSLWQQCL…LLRFEVGSKP (82 aa). The tract at residues 82–127 is domain II; it reads PPQMAVLQPASQHASEAPSQAAVARPRPSRPSWDNAPVQPELSYRS. The segment at 91–118 is disordered; it reads ASQHASEAPSQAAVARPRPSRPSWDNAP. The interval 128–344 is domain III, AAA+ region; it reads NVNPKHNFDN…GALNRVIANA (217 aa). The ATP site is built by G172, G174, K175, and T176. Residues 345-464 are domain IV, binds dsDNA; that stretch reads NFTGRAITID…FSNLIRTLSS (120 aa).

This sequence belongs to the DnaA family. In terms of assembly, oligomerizes as a right-handed, spiral filament on DNA at oriC.

Its subcellular location is the cytoplasm. Plays an essential role in the initiation and regulation of chromosomal replication. ATP-DnaA binds to the origin of replication (oriC) to initiate formation of the DNA replication initiation complex once per cell cycle. Binds the DnaA box (a 9 base pair repeat at the origin) and separates the double-stranded (ds)DNA. Forms a right-handed helical filament on oriC DNA; dsDNA binds to the exterior of the filament while single-stranded (ss)DNA is stabiized in the filament's interior. The ATP-DnaA-oriC complex binds and stabilizes one strand of the AT-rich DNA unwinding element (DUE), permitting loading of DNA polymerase. After initiation quickly degrades to an ADP-DnaA complex that is not apt for DNA replication. Binds acidic phospholipids. The chain is Chromosomal replication initiator protein DnaA from Sodalis glossinidius (strain morsitans).